A 551-amino-acid polypeptide reads, in one-letter code: Chaperonin GroEL 2 (551 aa).

Residues 30–33, K51, 87–91, G415, and D496 each bind ATP; these read TLGP and DGTTT.

The protein belongs to the chaperonin (HSP60) family. Forms a cylinder of 14 subunits composed of two heptameric rings stacked back-to-back. Interacts with the co-chaperonin GroES.

Its subcellular location is the cytoplasm. The enzyme catalyses ATP + H2O + a folded polypeptide = ADP + phosphate + an unfolded polypeptide.. Its function is as follows. Together with its co-chaperonin GroES, plays an essential role in assisting protein folding. The GroEL-GroES system forms a nano-cage that allows encapsulation of the non-native substrate proteins and provides a physical environment optimized to promote and accelerate protein folding. The sequence is that of Chaperonin GroEL 2 from Rhodopseudomonas palustris (strain BisB18).